The sequence spans 443 residues: Clustered-asparagine-rich protein (443 aa).

One can recognise an RRM 1 domain in the interval 16–106 (TKLHIQNIPP…RNIDAKFAVP (91 aa)). The interval 253–279 (NHLNNNNNNINNNNNNNNNNNNNNNVM) is disordered. Over residues 256-277 (NNNNNNINNNNNNNNNNNNNNN) the composition is skewed to low complexity. Residues 342–435 (SSITIMKKQN…KYLKVQLKKG (94 aa)) enclose the RRM 2 domain.

This is Clustered-asparagine-rich protein from Plasmodium falciparum.